Reading from the N-terminus, the 872-residue chain is Alanine--tRNA ligase (872 aa).

Residues His558, His562, Cys660, and His664 each coordinate Zn(2+).

Belongs to the class-II aminoacyl-tRNA synthetase family. The cofactor is Zn(2+).

The protein resides in the cytoplasm. The catalysed reaction is tRNA(Ala) + L-alanine + ATP = L-alanyl-tRNA(Ala) + AMP + diphosphate. Functionally, catalyzes the attachment of alanine to tRNA(Ala) in a two-step reaction: alanine is first activated by ATP to form Ala-AMP and then transferred to the acceptor end of tRNA(Ala). Also edits incorrectly charged Ser-tRNA(Ala) and Gly-tRNA(Ala) via its editing domain. This is Alanine--tRNA ligase from Chlamydia pneumoniae (Chlamydophila pneumoniae).